Reading from the N-terminus, the 482-residue chain is ATP-dependent rRNA helicase rrp3 (482 aa).

The interval 1 to 55 (MSSVKRRKTEKNTSSGLKSKQAKEPKEASPLSSPEPTEENQNNEIEEGTEEEEVT) is disordered. The segment covering 44 to 53 (EIEEGTEEEE) has biased composition (acidic residues). The short motif at 56–84 (KSFKDLGIVDSLCEACDTLGYKAPTPIQR) is the Q motif element. Residues 87 to 258 (IPLALQGRDL…RASLKDPLRV (172 aa)) enclose the Helicase ATP-binding domain. Position 100–107 (100–107 (AETGSGKT)) interacts with ATP. The DEAD box motif lies at 206–209 (DEAD). Positions 282–430 (HKDTYLIYLL…EYQTVKDEVM (149 aa)) constitute a Helicase C-terminal domain. Basic and acidic residues-rich tracts occupy residues 444 to 456 (RNEM…DRGK) and 472 to 482 (RGRDEMDREEG). A disordered region spans residues 444 to 482 (RNEMKNLHEDRGKKGAVLKGRRPANGAKRGRDEMDREEG).

This sequence belongs to the DEAD box helicase family. DDX47/RRP3 subfamily. In terms of assembly, interacts with the SSU processome.

The protein localises to the nucleus. The catalysed reaction is ATP + H2O = ADP + phosphate + H(+). Its function is as follows. ATP-dependent rRNA helicase required for pre-ribosomal RNA processing. Involved in the maturation of the 35S-pre-rRNA and to its cleavage to mature 18S rRNA. The polypeptide is ATP-dependent rRNA helicase rrp3 (Sclerotinia sclerotiorum (strain ATCC 18683 / 1980 / Ss-1) (White mold)).